Reading from the N-terminus, the 197-residue chain is Phospholipid hydroperoxide glutathione peroxidase (197 aa).

A Phosphoserine modification is found at Ser-40. Sec-73 is an active-site residue. Position 73 (Sec-73) is a non-standard amino acid, selenocysteine.

The protein belongs to the glutathione peroxidase family. In terms of assembly, monomer. Has a tendency to form higher mass oligomers. Interacts with FUNDC1; this interaction promotes GPX4 recruitment into mitochondria through TOM/TIM complex where it is degraded by mitophagy. Expressed very intensively in the testis and weakly in lung, heart, and cerebellum.

Its subcellular location is the mitochondrion. It is found in the cytoplasm. The catalysed reaction is a hydroperoxy polyunsaturated fatty acid + 2 glutathione = a hydroxy polyunsaturated fatty acid + glutathione disulfide + H2O. The enzyme catalyses 2 glutathione + H2O2 = glutathione disulfide + 2 H2O. It carries out the reaction tert-butyl hydroperoxide + 2 glutathione = tert-butanol + glutathione disulfide + H2O. It catalyses the reaction cumene hydroperoxide + 2 glutathione = 2-phenylpropan-2-ol + glutathione disulfide + H2O. The catalysed reaction is (9S)-hydroperoxy-(10E,12Z)-octadecadienoate + 2 glutathione = (9S)-hydroxy-(10E,12Z)-octadecadienoate + glutathione disulfide + H2O. The enzyme catalyses (13S)-hydroperoxy-(9Z,11E)-octadecadienoate + 2 glutathione = (13S)-hydroxy-(9Z,11E)-octadecadienoate + glutathione disulfide + H2O. It carries out the reaction (5S)-hydroperoxy-(6E,8Z,11Z,14Z)-eicosatetraenoate + 2 glutathione = (5S)-hydroxy-(6E,8Z,11Z,14Z)-eicosatetraenoate + glutathione disulfide + H2O. It catalyses the reaction (12R)-hydroperoxy-(5Z,8Z,10E,14Z)-eicosatetraenoate + 2 glutathione = (12R)-hydroxy-(5Z,8Z,10E,14Z)-eicosatetraenoate + glutathione disulfide + H2O. The catalysed reaction is (12S)-hydroperoxy-(5Z,8Z,10E,14Z)-eicosatetraenoate + 2 glutathione = (12S)-hydroxy-(5Z,8Z,10E,14Z)-eicosatetraenoate + glutathione disulfide + H2O. The enzyme catalyses (15S)-hydroperoxy-(5Z,8Z,11Z,13E)-eicosatetraenoate + 2 glutathione = (15S)-hydroxy-(5Z,8Z,11Z,13E)-eicosatetraenoate + glutathione disulfide + H2O. It carries out the reaction (5S)-hydroperoxy-(6E,8Z,11Z,14Z,17Z)-eicosapentaenoate + 2 glutathione = (5S)-hydroxy-(6E,8Z,11Z,14Z,17Z)-eicosapentaenoate + glutathione disulfide + H2O. It catalyses the reaction (12S)-hydroperoxy-(5Z,8Z,10E,14Z,17Z)-eicosapentaenoate + 2 glutathione = (12S)-hydroxy-(5Z,8Z,10E,14Z,17Z)-eicosapentaenoate + glutathione disulfide + H2O. The catalysed reaction is (15S)-hydroperoxy-(5Z,8Z,11Z,13E,17Z)-eicosapentaenoate + 2 glutathione = (15S)-hydroxy-(5Z,8Z,11Z,13E,17Z)-eicosapentaenoate + glutathione disulfide + H2O. The enzyme catalyses (15S)-hydroperoxy-(11Z,13E)-eicosadienoate + 2 glutathione = (15S)-hydroxy-(11Z,13E)-eicosadienoate + glutathione disulfide + H2O. It carries out the reaction (17S)-hydroperoxy-(4Z,7Z,10Z,13Z,15E,19Z)-docosahexaenoate + 2 glutathione = (17S)-hydroxy-(4Z,7Z,10Z,13Z,15E,19Z)-docosahexaenoate + glutathione disulfide + H2O. It catalyses the reaction a hydroperoxy-1,2-diacyl-glycero-3-phosphocholine + 2 glutathione = a hydroxy-1,2-diacyl-glycero-3-phosphocholine + glutathione disulfide + H2O. Functionally, essential antioxidant peroxidase that directly reduces phospholipid hydroperoxide even if they are incorporated in membranes and lipoproteins. Can also reduce fatty acid hydroperoxide, cholesterol hydroperoxide and thymine hydroperoxide. Plays a key role in protecting cells from oxidative damage by preventing membrane lipid peroxidation. Required to prevent cells from ferroptosis, a non-apoptotic cell death resulting from an iron-dependent accumulation of lipid reactive oxygen species. The presence of selenocysteine (Sec) versus Cys at the active site is essential for life: it provides resistance to overoxidation and prevents cells against ferroptosis. The presence of Sec at the active site is also essential for the survival of a specific type of parvalbumin-positive interneurons, thereby preventing against fatal epileptic seizures. May be required to protect cells from the toxicity of ingested lipid hydroperoxides. Required for normal sperm development and male fertility. Essential for maturation and survival of photoreceptor cells. Plays a role in a primary T-cell response to viral and parasitic infection by protecting T-cells from ferroptosis and by supporting T-cell expansion. Plays a role of glutathione peroxidase in platelets in the arachidonic acid metabolism. Reduces hydroperoxy ester lipids formed by a 15-lipoxygenase that may play a role as down-regulator of the cellular 15-lipoxygenase pathway. Can also reduce small soluble hydroperoxides such as H2O2, cumene hydroperoxide and tert-butyl hydroperoxide. The polypeptide is Phospholipid hydroperoxide glutathione peroxidase (Macaca fuscata fuscata (Japanese macaque)).